Consider the following 302-residue polypeptide: Ribosomal RNA small subunit methyltransferase H (302 aa).

Residues 32 to 34 (GGH), D51, F78, D97, and Q104 each bind S-adenosyl-L-methionine.

This sequence belongs to the methyltransferase superfamily. RsmH family.

The protein resides in the cytoplasm. It catalyses the reaction cytidine(1402) in 16S rRNA + S-adenosyl-L-methionine = N(4)-methylcytidine(1402) in 16S rRNA + S-adenosyl-L-homocysteine + H(+). Specifically methylates the N4 position of cytidine in position 1402 (C1402) of 16S rRNA. The chain is Ribosomal RNA small subunit methyltransferase H from Nitratiruptor sp. (strain SB155-2).